A 137-amino-acid polypeptide reads, in one-letter code: MTSPATFGLSKSERLYLRDEINTVFGEGKAFVVYPLRVVYRLGSEHRAAYSSMLVSVAKKRFRRAVKRNRVKRLVREAYRLNKHLLNDVLQERQIYATIAFMVVSDELPDFRTVERAMQKSLIRIAGNVPSSALKNE.

The protein belongs to the RnpA family. As to quaternary structure, consists of a catalytic RNA component (M1 or rnpB) and a protein subunit.

It catalyses the reaction Endonucleolytic cleavage of RNA, removing 5'-extranucleotides from tRNA precursor.. RNaseP catalyzes the removal of the 5'-leader sequence from pre-tRNA to produce the mature 5'-terminus. It can also cleave other RNA substrates such as 4.5S RNA. The protein component plays an auxiliary but essential role in vivo by binding to the 5'-leader sequence and broadening the substrate specificity of the ribozyme. This chain is Ribonuclease P protein component, found in Porphyromonas gingivalis (strain ATCC 33277 / DSM 20709 / CIP 103683 / JCM 12257 / NCTC 11834 / 2561).